Consider the following 205-residue polypeptide: Small ribosomal subunit protein uS4 (205 aa).

A compositionally biased stretch (basic residues) spans 1–12; sequence MSKRVQAKHKLD. The disordered stretch occupies residues 1 to 49; the sequence is MSKRVQAKHKLDRRMGQNIWGRPKSPVNRREYGPGQHGQRRKGKMSDFG. The 62-residue stretch at 94-155 folds into the S4 RNA-binding domain; that stretch reads RRLDAVVYRS…ASRQLEIVVV (62 aa).

The protein belongs to the universal ribosomal protein uS4 family. Part of the 30S ribosomal subunit. Contacts protein S5. The interaction surface between S4 and S5 is involved in control of translational fidelity.

Functionally, one of the primary rRNA binding proteins, it binds directly to 16S rRNA where it nucleates assembly of the body of the 30S subunit. Its function is as follows. With S5 and S12 plays an important role in translational accuracy. The sequence is that of Small ribosomal subunit protein uS4 from Methylorubrum extorquens (strain CM4 / NCIMB 13688) (Methylobacterium extorquens).